We begin with the raw amino-acid sequence, 398 residues long: Lysophosphatidylserine lipase ABHD12 (398 aa).

Residues 1-15 (MRKRTEPVTLEHERC) are compositionally biased toward basic and acidic residues. The interval 1–24 (MRKRTEPVTLEHERCAASGSSSSG) is disordered. Over 1 to 74 (MRKRTEPVTL…RKSLWFRLRK (74 aa)) the chain is Cytoplasmic. The chain crosses the membrane as a helical span at residues 75–95 (ILLCVLGFYIAIPFLVKLCPG). Residues 96–398 (IQAKLIFLNF…LGKSEPERQH (303 aa)) lie on the Extracellular side of the membrane. N-linked (GlcNAc...) asparagine glycosylation occurs at asparagine 123. The Nucleophile role is filled by serine 246. Catalysis depends on charge relay system residues aspartate 333 and histidine 372.

The protein belongs to the serine esterase family.

Its subcellular location is the endoplasmic reticulum membrane. It carries out the reaction 1-(9Z-octadecenoyl)-sn-glycero-3-phospho-L-serine + H2O = sn-glycero-3-phospho-L-serine + (9Z)-octadecenoate + H(+). It catalyses the reaction 1-(9Z-octadecenoyl)-sn-glycero-3-phospho-(1'-sn-glycerol) + H2O = sn-glycero-3-phospho-(1'-sn-glycerol) + (9Z)-octadecenoate + H(+). The catalysed reaction is 1-(9Z-octadecenoyl)-sn-glycero-3-phospho-(1D-myo-inositol) + H2O = sn-glycero-3-phospho-1D-myo-inositol + (9Z)-octadecenoate + H(+). The enzyme catalyses 1-(9Z-octadecenoyl)-sn-glycero-3-phosphoethanolamine + H2O = sn-glycero-3-phosphoethanolamine + (9Z)-octadecenoate + H(+). It carries out the reaction 1-(9Z-octadecenoyl)-sn-glycero-3-phosphocholine + H2O = 1-(9Z-octadecenoyl)-sn-glycerol + phosphocholine + H(+). It catalyses the reaction 2-(9Z-octadecenoyl)-glycerol + H2O = glycerol + (9Z)-octadecenoate + H(+). The catalysed reaction is 1-hexadecanoyl-sn-glycero-3-phospho-L-serine + H2O = sn-glycero-3-phospho-L-serine + hexadecanoate + H(+). The enzyme catalyses 2-(5Z,8Z,11Z,14Z-eicosatetraenoyl)-glycerol + H2O = glycerol + (5Z,8Z,11Z,14Z)-eicosatetraenoate + H(+). It carries out the reaction Hydrolyzes glycerol monoesters of long-chain fatty acids.. It catalyses the reaction 1-decanoylglycerol + H2O = decanoate + glycerol + H(+). The catalysed reaction is 1-dodecanoylglycerol + H2O = dodecanoate + glycerol + H(+). The enzyme catalyses 1-tetradecanoylglycerol + H2O = tetradecanoate + glycerol + H(+). It carries out the reaction 2-hexadecanoylglycerol + H2O = glycerol + hexadecanoate + H(+). It catalyses the reaction 1-(9Z-octadecenoyl)-glycerol + H2O = glycerol + (9Z)-octadecenoate + H(+). The catalysed reaction is 2-(9Z,12Z-octadecadienoyl)-glycerol + H2O = (9Z,12Z)-octadecadienoate + glycerol + H(+). The enzyme catalyses 1-(5Z,8Z,11Z,14Z-eicosatetraenoyl)-glycerol + H2O = glycerol + (5Z,8Z,11Z,14Z)-eicosatetraenoate + H(+). It carries out the reaction 1-(9Z,12Z-octadecadienoyl)-glycerol + H2O = (9Z,12Z)-octadecadienoate + glycerol + H(+). It catalyses the reaction 1-hexadecanoylglycerol + H2O = glycerol + hexadecanoate + H(+). The catalysed reaction is 1-octadecanoylglycerol + H2O = octadecanoate + glycerol + H(+). The enzyme catalyses 1-octadecanoyl-2-(9,10-epoxyoctadecanoyl)-sn-glycero-3-phospho-L-serine + H2O = 9,10-epoxyoctadecanoate + 1-octadecanoyl-sn-glycero-3-phosphoserine + H(+). It carries out the reaction 1-octadecanoyl-2-(10-hydroxyoctadecanoyl)-sn-glycero-3-phospho-L-serine + H2O = 1-octadecanoyl-sn-glycero-3-phosphoserine + 10-hydroxyoctadecanoate + H(+). It catalyses the reaction 1-hexadecanoyl-2-(10-hydroxyoctadecanoyl)-sn-glycero-3-phospho-L-serine + H2O = 10-hydroxyoctadecanoate + 1-hexadecanoyl-sn-glycero-3-phospho-L-serine + H(+). In terms of biological role, lysophosphatidylserine (LPS) lipase that mediates the hydrolysis of lysophosphatidylserine, a class of signaling lipids that regulates immunological and neurological processes. Represents a major lysophosphatidylserine lipase in the brain, thereby playing a key role in the central nervous system. Also able to hydrolyze oxidized phosphatidylserine; oxidized phosphatidylserine is produced in response to severe inflammatory stress and constitutes a proapoptotic 'eat me' signal. Also has monoacylglycerol (MAG) lipase activity: hydrolyzes 2-arachidonoylglycerol (2-AG), thereby acting as a regulator of endocannabinoid signaling pathways. Has a strong preference for very-long-chain lipid substrates; substrate specificity is likely due to improved catalysis and not improved substrate binding. In Rattus norvegicus (Rat), this protein is Lysophosphatidylserine lipase ABHD12.